The primary structure comprises 261 residues: Glucosamine-6-phosphate deaminase (261 aa).

Asp67 acts as the Proton acceptor; for enolization step in catalysis. Catalysis depends on Asn136, which acts as the For ring-opening step. The active-site Proton acceptor; for ring-opening step is the His138. Glu143 functions as the For ring-opening step in the catalytic mechanism.

Belongs to the glucosamine/galactosamine-6-phosphate isomerase family. NagB subfamily.

It carries out the reaction alpha-D-glucosamine 6-phosphate + H2O = beta-D-fructose 6-phosphate + NH4(+). Its pathway is amino-sugar metabolism; N-acetylneuraminate degradation; D-fructose 6-phosphate from N-acetylneuraminate: step 5/5. Its function is as follows. Catalyzes the reversible isomerization-deamination of glucosamine 6-phosphate (GlcN6P) to form fructose 6-phosphate (Fru6P) and ammonium ion. The chain is Glucosamine-6-phosphate deaminase from Cutibacterium acnes (strain DSM 16379 / KPA171202) (Propionibacterium acnes).